The chain runs to 503 residues: Maturase K (503 aa).

This sequence belongs to the intron maturase 2 family. MatK subfamily.

Its subcellular location is the plastid. It localises to the chloroplast. In terms of biological role, usually encoded in the trnK tRNA gene intron. Probably assists in splicing its own and other chloroplast group II introns. In Callistemon polandii (Gold-tipped bottlebrush), this protein is Maturase K.